A 224-amino-acid chain; its full sequence is Phosphoribosylformylglycinamidine synthase subunit PurQ (224 aa).

The Glutamine amidotransferase type-1 domain maps to 3-224; that stretch reads FGVVVFPGSN…GLLEKVVALA (222 aa). Residue Cys86 is the Nucleophile of the active site. Catalysis depends on residues His195 and Glu197.

In terms of assembly, part of the FGAM synthase complex composed of 1 PurL, 1 PurQ and 2 PurS subunits.

The protein resides in the cytoplasm. It carries out the reaction N(2)-formyl-N(1)-(5-phospho-beta-D-ribosyl)glycinamide + L-glutamine + ATP + H2O = 2-formamido-N(1)-(5-O-phospho-beta-D-ribosyl)acetamidine + L-glutamate + ADP + phosphate + H(+). The catalysed reaction is L-glutamine + H2O = L-glutamate + NH4(+). It functions in the pathway purine metabolism; IMP biosynthesis via de novo pathway; 5-amino-1-(5-phospho-D-ribosyl)imidazole from N(2)-formyl-N(1)-(5-phospho-D-ribosyl)glycinamide: step 1/2. In terms of biological role, part of the phosphoribosylformylglycinamidine synthase complex involved in the purines biosynthetic pathway. Catalyzes the ATP-dependent conversion of formylglycinamide ribonucleotide (FGAR) and glutamine to yield formylglycinamidine ribonucleotide (FGAM) and glutamate. The FGAM synthase complex is composed of three subunits. PurQ produces an ammonia molecule by converting glutamine to glutamate. PurL transfers the ammonia molecule to FGAR to form FGAM in an ATP-dependent manner. PurS interacts with PurQ and PurL and is thought to assist in the transfer of the ammonia molecule from PurQ to PurL. The sequence is that of Phosphoribosylformylglycinamidine synthase subunit PurQ from Trichormus variabilis (strain ATCC 29413 / PCC 7937) (Anabaena variabilis).